A 158-amino-acid polypeptide reads, in one-letter code: UPF0262 protein RHOS4_22360 (158 aa).

It belongs to the UPF0262 family.

In Cereibacter sphaeroides (strain ATCC 17023 / DSM 158 / JCM 6121 / CCUG 31486 / LMG 2827 / NBRC 12203 / NCIMB 8253 / ATH 2.4.1.) (Rhodobacter sphaeroides), this protein is UPF0262 protein RHOS4_22360.